A 75-amino-acid polypeptide reads, in one-letter code: Kappa-conotoxin RIIIK (75 aa).

The signal sequence occupies residues 1 to 19; it reads MSKLGVLLTICLLLFPLTA. Residues 20–50 constitute a propeptide that is removed on maturation; sequence LPMDGDQPVDRLAERMQDNISSEQHTFFEKR. 4-hydroxyproline occurs at positions 52, 63, 65, and 71. 3 disulfides stabilise this stretch: cysteine 54-cysteine 67, cysteine 55-cysteine 72, and cysteine 62-cysteine 73. Threonine amide is present on threonine 74.

This sequence belongs to the conotoxin M superfamily. As to expression, expressed by the venom duct.

The protein localises to the secreted. Its function is as follows. Kappa-conotoxins inhibits voltage-gated potassium channels (Kv). This synthetic toxin reversibly inhibits the insect potassium channel Shaker K+, the teleost homolog TSha1 and the mammalian Kv1.2/KCNA2 channel. Interacts with the pore region of the insect channel, in a state-dependent manner. Causes seizure when intracerebrovascularly injected into mice. Is also toxic when intrathecally injected into mice, but shows no visible effects by intraperitoneal injection. Shows protective effects on cardiac tissue when administered after an ischemic event. The polypeptide is Kappa-conotoxin RIIIK (Conus radiatus (Rayed cone)).